Consider the following 275-residue polypeptide: Probable ABC transporter permease protein PH1216 (275 aa).

6 consecutive transmembrane segments (helical) span residues 10–30, 73–93, 105–125, 137–157, 181–203, and 241–261; these read LLYI…WSAI, IFTT…GFTI, LLAL…IPLV, ILGL…LLFT, IYTK…YQFT, and IQMA…IALG. Positions 68-260 constitute an ABC transmembrane type-1 domain; that stretch reads ILNSLIFTTF…LPTLLIMIAL (193 aa).

The protein belongs to the binding-protein-dependent transport system permease family. MalFG subfamily.

The protein localises to the cell membrane. Probably part of a binding-protein-dependent transport system PH1214/15/16. Probably responsible for the translocation of the substrate across the membrane. The polypeptide is Probable ABC transporter permease protein PH1216 (Pyrococcus horikoshii (strain ATCC 700860 / DSM 12428 / JCM 9974 / NBRC 100139 / OT-3)).